Consider the following 616-residue polypeptide: Chaperone protein HtpG (616 aa).

An a; substrate-binding region spans residues 1–333 (MKKQFDTEVN…CQDLPLNVSR (333 aa)). Positions 334 to 542 (EILQQNKILS…SNDPTYQMQK (209 aa)) are b. Residues 543 to 616 (IMLSMGQEVK…INEFIEKDFL (74 aa)) are c.

It belongs to the heat shock protein 90 family. Homodimer.

It is found in the cytoplasm. In terms of biological role, molecular chaperone. Has ATPase activity. The sequence is that of Chaperone protein HtpG from Borreliella burgdorferi (strain ATCC 35210 / DSM 4680 / CIP 102532 / B31) (Borrelia burgdorferi).